The following is a 279-amino-acid chain: 4-diphosphocytidyl-2-C-methyl-D-erythritol kinase (279 aa).

K9 is a catalytic residue. ATP is bound at residue 92–102 (PLAAGLGGGSS). D134 is an active-site residue.

Belongs to the GHMP kinase family. IspE subfamily.

The catalysed reaction is 4-CDP-2-C-methyl-D-erythritol + ATP = 4-CDP-2-C-methyl-D-erythritol 2-phosphate + ADP + H(+). Its pathway is isoprenoid biosynthesis; isopentenyl diphosphate biosynthesis via DXP pathway; isopentenyl diphosphate from 1-deoxy-D-xylulose 5-phosphate: step 3/6. In terms of biological role, catalyzes the phosphorylation of the position 2 hydroxy group of 4-diphosphocytidyl-2C-methyl-D-erythritol. The chain is 4-diphosphocytidyl-2-C-methyl-D-erythritol kinase from Syntrophus aciditrophicus (strain SB).